We begin with the raw amino-acid sequence, 285 residues long: MDYEASRIVEMVEDEEHIDLPPGFRFHPTDEELITHYLKPKVFNTFFSATAIGEVDLNKIEPWDLPWKAKMGEKEWYFFCVRDRKYPTGLRTNRATEAGYWKATGKDKEIFKGKSLVGMKKTLVFYKGRAPKGVKTNWVMHEYRLEGKYCIENLPQTAKNEWVICRVFQKRADGTKVPMSMLDPHINRMEPAGLPSLMDCSQRDSFTGSSSHVTCFSDQETEDKRLVHESKDGFGSLFYSDPLFLQDNYSLMKLLLDGQETQFSGKPFDGRDSSGTEELDCVWNF.

The NAC domain maps to 20-170 (LPPGFRFHPT…EWVICRVFQK (151 aa)). Residues 117–176 (VGMKKTLVFYKGRAPKGVKTNWVMHEYRLEGKYCIENLPQTAKNEWVICRVFQKRADGTK) mediate DNA binding.

In terms of assembly, forms homodimers. Interacts with GLK1 and GLK2. Interacts with NLA. In terms of processing, ubiquitinated by NLA. Ubiquitination of NAC92 leads to its degradation by the proteasome during leaf senescence under nitrogen deficiency. Mostly expressed in roots and flowers, and, to a lower extent, in shoots and leaves. Particularly expressed in old and senescing tissues.

It is found in the nucleus. Its function is as follows. Transcription activator that binds to DNA in promoters of target genes on a specific bipartite motif 5'-[ACG][CA]GT[AG](5-6n)[CT]AC[AG]-3'. Promotes lateral root development. Triggers the expression of senescence-associated genes during age-, salt- and dark-induced senescence through a regulatory network that may involve cross-talk with salt- and H(2)O(2)-dependent signaling pathways. Also regulates genes during seed germination. Positively regulates aging-induced cell death. Involved in age-related resistance (ARR) against Pseudomonas syringae pv. tomato and Hyaloperonospora arabidopsidis. Antagonizes GLK1 and GLK2 transcriptional activity, shifting the balance from chloroplast maintenance towards deterioration during leaf senescence. Promotes the expression of senescence-associated genes, including ENDO1/BFN1, SWEET15/SAG29 and SINA1/At3g13672, during senescence onset. This is NAC domain-containing protein 92 from Arabidopsis thaliana (Mouse-ear cress).